The chain runs to 500 residues: Cytochrome P450 2D16 (500 aa).

Ser249 is modified (phosphoserine). Cys446 contributes to the heme binding site.

This sequence belongs to the cytochrome P450 family. Heme serves as cofactor. Expressed at high levels in the inner zone of the adrenal cortex.

Its subcellular location is the endoplasmic reticulum membrane. The protein localises to the microsome membrane. It catalyses the reaction an organic molecule + reduced [NADPH--hemoprotein reductase] + O2 = an alcohol + oxidized [NADPH--hemoprotein reductase] + H2O + H(+). Functionally, cytochromes P450 are a group of heme-thiolate monooxygenases. In liver microsomes, this enzyme is involved in an NADPH-dependent electron transport pathway. It oxidizes a variety of structurally unrelated compounds, including steroids, fatty acids, and xenobiotics. This is Cytochrome P450 2D16 (CYP2D16) from Cavia porcellus (Guinea pig).